Consider the following 305-residue polypeptide: Serine/threonine-protein phosphatase PP-X isozyme 2 (305 aa).

4 residues coordinate Mn(2+): Asp51, His53, Asp79, and Asn111. His112 serves as the catalytic Proton donor. Residues His161 and His236 each coordinate Mn(2+).

The protein belongs to the PPP phosphatase family. PP-4 (PP-X) subfamily. Requires Mn(2+) as cofactor. In terms of tissue distribution, ubiquitous, mostly expressed in root mersitems, flowers, and vascular tissues.

It localises to the plastid stroma. The catalysed reaction is O-phospho-L-seryl-[protein] + H2O = L-seryl-[protein] + phosphate. It catalyses the reaction O-phospho-L-threonyl-[protein] + H2O = L-threonyl-[protein] + phosphate. This is Serine/threonine-protein phosphatase PP-X isozyme 2 (PPX2) from Arabidopsis thaliana (Mouse-ear cress).